The sequence spans 468 residues: Ribulose bisphosphate carboxylase large chain (468 aa).

The residue at position 5 (Lys5) is an N6,N6,N6-trimethyllysine. Substrate is bound by residues Asn114 and Thr164. Lys166 functions as the Proton acceptor in the catalytic mechanism. Residue Lys168 coordinates substrate. Residues Lys192, Asp194, and Glu195 each contribute to the Mg(2+) site. Lys192 carries the N6-carboxylysine modification. The Proton acceptor role is filled by His285. 3 residues coordinate substrate: Arg286, His318, and Ser370.

The protein belongs to the RuBisCO large chain family. Type I subfamily. Heterohexadecamer of 8 large chains and 8 small chains; disulfide-linked. The disulfide link is formed within the large subunit homodimers. It depends on Mg(2+) as a cofactor. Post-translationally, the disulfide bond which can form in the large chain dimeric partners within the hexadecamer appears to be associated with oxidative stress and protein turnover.

Its subcellular location is the plastid. The protein localises to the chloroplast. The enzyme catalyses 2 (2R)-3-phosphoglycerate + 2 H(+) = D-ribulose 1,5-bisphosphate + CO2 + H2O. It carries out the reaction D-ribulose 1,5-bisphosphate + O2 = 2-phosphoglycolate + (2R)-3-phosphoglycerate + 2 H(+). Functionally, ruBisCO catalyzes two reactions: the carboxylation of D-ribulose 1,5-bisphosphate, the primary event in carbon dioxide fixation, as well as the oxidative fragmentation of the pentose substrate in the photorespiration process. Both reactions occur simultaneously and in competition at the same active site. The chain is Ribulose bisphosphate carboxylase large chain from Datura stramonium (Jimsonweed).